The chain runs to 374 residues: 2,7-anhydro-N-acetylneuraminate hydratase (374 aa).

NAD(+) is bound by residues Tyr13, Phe14, Asp35, Asn38, Thr70, Asn72, His75, Glu92, Lys93, Trp162, and Lys163.

This sequence belongs to the Gfo/Idh/MocA family. In terms of assembly, homodimer. It depends on NAD(+) as a cofactor.

The enzyme catalyses N-acetyl-2,7-anhydro-alpha-neuraminate + H2O = N-acetyl-alpha-neuraminate. With respect to regulation, neu5Ac is produced in the presence of NAD(+) or NADH, but not in the presence of FAD. Hydratase involved in the degradation of sialic acids, which are present in the host mucus layer and represent a much-coveted source of nutrients for R.gnavus, a prevalent member of the normal gut microbiota. Catalyzes the reversible conversion of the dehydrated form of N-acetylneuraminate (Neu5Ac), 2,7-anhydro-N-acetylneuraminate (2,7-AN), to Neu5Ac, allowing growth on 2,7-AN produced by the IT-sialidase NanH. Acts through a multistep mechanism involving a keto intermediate and cycling of NADH/NAD(+). This Mediterraneibacter gnavus (strain ATCC 29149 / DSM 114966 / JCM 6515 / VPI C7-9) (Ruminococcus gnavus) protein is 2,7-anhydro-N-acetylneuraminate hydratase.